Reading from the N-terminus, the 705-residue chain is Effector protein AvrPphDPsv (705 aa).

The span at 1–15 (MNPLQSIQHNITTPP) shows a compositional bias: polar residues. 2 disordered regions span residues 1–40 (MNPL…ISPS) and 175–205 (RLET…RRES).

The protein localises to the secreted. Functionally, effector protein involved in non-host recognition. The sequence is that of Effector protein AvrPphDPsv (avrPphDPsv) from Pseudomonas savastanoi (Pseudomonas syringae pv. savastanoi).